The chain runs to 463 residues: Probable diacyglycerol O-acyltransferase tgs1 (463 aa).

An N-acetylmethionine modification is found at M1. H137 functions as the Proton acceptor in the catalytic mechanism.

The protein belongs to the long-chain O-acyltransferase family.

It carries out the reaction an acyl-CoA + a 1,2-diacyl-sn-glycerol = a triacyl-sn-glycerol + CoA. The enzyme catalyses di-(9Z)-octadecenoylglycerol + (9Z)-octadecenoyl-CoA = 1,2,3-tri-(9Z-octadecenoyl)-glycerol + CoA. It participates in glycerolipid metabolism; triacylglycerol biosynthesis. Its function is as follows. Catalyzes the terminal and only committed step in triacylglycerol synthesis by using diacylglycerol and fatty acyl CoA as substrates. Required for storage lipid synthesis. Upon expression in E.coli functions as a triacylglycerol synthase, making triacylglycerol (TG) from diolein and long-chain fatty acyl-CoA. Prefers C(26:0)-CoA over C(18:1)-CoA. TG synthesis activity increases in M.tuberculosis upon oxygen depletion and NO treatment, with concomitant accumulation of TG in inclusion bodies. As disruption of the gene encoding this protein obviates TG synthesis this seems to be the major enzyme involved in production of TG. Has no wax synthase activity to produce wax esters. The polypeptide is Probable diacyglycerol O-acyltransferase tgs1 (tgs1) (Mycobacterium tuberculosis (strain ATCC 25618 / H37Rv)).